We begin with the raw amino-acid sequence, 434 residues long: Indole diterpene prenyltransferase nodD2 (434 aa).

L-tryptophan contacts are provided by residues Leu-85–Ile-86 and Glu-94. Residues Arg-107, Lys-194, Arg-268, Lys-270, Tyr-272, Gln-351, Tyr-353, Tyr-418, and Tyr-422 each contribute to the substrate site.

It belongs to the tryptophan dimethylallyltransferase family.

The protein operates within secondary metabolite biosynthesis. In terms of biological role, indole diterpene prenyltransferase; part of the gene cluster that mediates the biosynthesis of the indole diterpenes nodulisporic acids (NA). Nodulisporic acid A (NAA) and its chemically modified derivatives are of particular significance because of their highly potent insecticidal activity against blood-feeding arthropods and lack of observable adverse effects on mammals, in particular the tremogenicity associated with the paspaline-derived IDTs is not observed. The geranylgeranyl diphosphate (GGPP) synthase ggs1, localized outside of the cluster, is proposed to catalyze the first step in nodulisporic acid biosynthesis via conversion of farnesyl pyrophosphate and isopentyl pyrophosphate into geranylgeranyl pyrophosphate (GGPP). Condensation of indole-3-glycerol phosphate with GGPP by the prenyl transferase nodC then forms 3-geranylgeranylindole (3-GGI). Epoxidation by the FAD-dependent monooxygenase nodM leads to a single-epoxidized-GGI that is substrate of the terpene cyclase nodB for cyclization to yield emindole SB. The terminal methyl carbon, C28, of emindole SB is then oxidized by the cytochrome P450 monooxygenase nodW to produce nodulisporic acid F (NAF), the pentacyclic core of NAA. NAF is converted to nodulisporic acid E (NAE) via prenylation. This step is probably performed by one of the indole diterpene prenyltransferases nodD1 or nodD2. Several oxidation steps performed by the FAD-linked oxidoreductase nodO and one of the cytochrome P450 monooxygenase nodR, nodX or nodZ further convert NAE to nodulisporic acid D (NAD). NAD is substrate of cytochrome P450 monooxygenase nodJ to produce the precursor of nodulisporic acid C (NAC), converted to NAC by one of the indole diterpene prenyltransferases nodD1 or nodD2. The FAD-dependent monooxygenase nodY2 then oxidizes NAC to nodulisporic acid B (NAB). Finally NAB is converted to NAA by one of the cytochrome P450 monooxygenases nodR, nodX or nodZ. In Hypoxylon pulicicidum, this protein is Indole diterpene prenyltransferase nodD2.